The primary structure comprises 182 residues: Biotin transporter BioY2 (182 aa).

The next 5 helical transmembrane spans lie at 12–32 (IALG…IGIV), 54–74 (FFAI…FTGG), 78–98 (IAVL…MGTL), 111–131 (IPAF…GTLW), and 150–170 (PFVF…LALI).

The protein belongs to the BioY family. In E.coli forms a stable energy-coupling factor (ECF) transporter complex composed of 2 membrane-embedded substrate-binding protein (S component), 2 ATP-binding proteins (A and A' components) and 2 transmembrane proteins (T component), probably with a stoichiometry of 2:1:1:2. May be able to interact with more than 1 S component at a time.

Its subcellular location is the cell membrane. Probably a biotin-binding protein that interacts with the energy-coupling factor (ECF) ABC-transporter complex. Unlike classic ABC transporters this ECF transporter provides the energy necessary to transport a number of different substrates. The substrates themselves are bound by transmembrane, not extracytoplasmic soluble proteins. In Lactococcus lactis subsp. cremoris (strain MG1363), this protein is Biotin transporter BioY2 (bioY2).